The primary structure comprises 349 residues: Lipoyl synthase (349 aa).

7 residues coordinate [4Fe-4S] cluster: C55, C60, C66, C81, C85, C88, and S292. The region spanning 67-281 (WESREATFLI…ADFARELGFG (215 aa)) is the Radical SAM core domain.

The protein belongs to the radical SAM superfamily. Lipoyl synthase family. The cofactor is [4Fe-4S] cluster.

It localises to the cytoplasm. The enzyme catalyses [[Fe-S] cluster scaffold protein carrying a second [4Fe-4S](2+) cluster] + N(6)-octanoyl-L-lysyl-[protein] + 2 oxidized [2Fe-2S]-[ferredoxin] + 2 S-adenosyl-L-methionine + 4 H(+) = [[Fe-S] cluster scaffold protein] + N(6)-[(R)-dihydrolipoyl]-L-lysyl-[protein] + 4 Fe(3+) + 2 hydrogen sulfide + 2 5'-deoxyadenosine + 2 L-methionine + 2 reduced [2Fe-2S]-[ferredoxin]. The protein operates within protein modification; protein lipoylation via endogenous pathway; protein N(6)-(lipoyl)lysine from octanoyl-[acyl-carrier-protein]: step 2/2. In terms of biological role, catalyzes the radical-mediated insertion of two sulfur atoms into the C-6 and C-8 positions of the octanoyl moiety bound to the lipoyl domains of lipoate-dependent enzymes, thereby converting the octanoylated domains into lipoylated derivatives. This is Lipoyl synthase from Corynebacterium diphtheriae (strain ATCC 700971 / NCTC 13129 / Biotype gravis).